The sequence spans 160 residues: S-ribosylhomocysteine lyase (160 aa).

Positions 57, 61, and 127 each coordinate Fe cation.

The protein belongs to the LuxS family. In terms of assembly, homodimer. The cofactor is Fe cation.

The enzyme catalyses S-(5-deoxy-D-ribos-5-yl)-L-homocysteine = (S)-4,5-dihydroxypentane-2,3-dione + L-homocysteine. In terms of biological role, involved in the synthesis of autoinducer 2 (AI-2) which is secreted by bacteria and is used to communicate both the cell density and the metabolic potential of the environment. The regulation of gene expression in response to changes in cell density is called quorum sensing. Catalyzes the transformation of S-ribosylhomocysteine (RHC) to homocysteine (HC) and 4,5-dihydroxy-2,3-pentadione (DPD). The polypeptide is S-ribosylhomocysteine lyase (Streptococcus mutans serotype c (strain ATCC 700610 / UA159)).